The chain runs to 515 residues: 1-pyrroline-5-carboxylate dehydrogenase 2 (515 aa).

Residues Glu286 and Cys320 contribute to the active site.

The protein belongs to the aldehyde dehydrogenase family. RocA subfamily.

It catalyses the reaction L-glutamate 5-semialdehyde + NAD(+) + H2O = L-glutamate + NADH + 2 H(+). It participates in amino-acid degradation; L-proline degradation into L-glutamate; L-glutamate from L-proline: step 2/2. Functionally, important for the use of proline as a sole carbon and energy source or a sole nitrogen source. The sequence is that of 1-pyrroline-5-carboxylate dehydrogenase 2 from Bacillus subtilis (strain 168).